A 156-amino-acid chain; its full sequence is Holliday junction resolvase (156 aa).

It belongs to the RuvC family. Poxviruses-type subfamily. Requires Mg(2+) as cofactor.

Functionally, nuclease that specifically cleaves and resolves four-way DNA Holliday junctions into linear duplex products. The polypeptide is Holliday junction resolvase (Vertebrata (FPV)).